The chain runs to 105 residues: UPF0145 protein jk0060 (105 aa).

This sequence belongs to the UPF0145 family.

The polypeptide is UPF0145 protein jk0060 (Corynebacterium jeikeium (strain K411)).